The chain runs to 327 residues: Putative hydroxymethylpyrimidine/phosphomethylpyrimidine kinase C18B5.05c (327 aa).

Position 54 (glutamine 54) interacts with 4-amino-5-hydroxymethyl-2-methylpyrimidine.

Belongs to the ThiD family.

It localises to the cytoplasm. The protein localises to the nucleus. It carries out the reaction 4-amino-5-hydroxymethyl-2-methylpyrimidine + ATP = 4-amino-2-methyl-5-(phosphooxymethyl)pyrimidine + ADP + H(+). The catalysed reaction is 4-amino-2-methyl-5-(phosphooxymethyl)pyrimidine + ATP = 4-amino-2-methyl-5-(diphosphooxymethyl)pyrimidine + ADP. It participates in cofactor biosynthesis; thiamine diphosphate biosynthesis; 4-amino-2-methyl-5-diphosphomethylpyrimidine from 5-amino-1-(5-phospho-D-ribosyl)imidazole: step 2/3. It functions in the pathway cofactor biosynthesis; thiamine diphosphate biosynthesis; 4-amino-2-methyl-5-diphosphomethylpyrimidine from 5-amino-1-(5-phospho-D-ribosyl)imidazole: step 3/3. Catalyzes the phosphorylation of hydroxymethylpyrimidine phosphate (HMP-P) to HMP-PP, and of HMP to HMP-P. The sequence is that of Putative hydroxymethylpyrimidine/phosphomethylpyrimidine kinase C18B5.05c from Schizosaccharomyces pombe (strain 972 / ATCC 24843) (Fission yeast).